Reading from the N-terminus, the 160-residue chain is Putative NrdI-like protein (160 aa).

The protein belongs to the NrdI family.

The chain is Putative NrdI-like protein from Streptococcus pyogenes serotype M3 (strain ATCC BAA-595 / MGAS315).